We begin with the raw amino-acid sequence, 452 residues long: Methionine aminopeptidase 2 (452 aa).

Residues 1–91 are disordered; the sequence is MTGVTGTEDT…KNKKKKKKKI (91 aa). Basic and acidic residues predominate over residues 8–38; the sequence is EDTKVIESKINELNIDKSKPEKTNKVNKSDD. Residues 39–62 show a composition bias toward acidic residues; it reads VDNDDVDNDDNDDEDNDDDDDEIT. Residues 74-91 show a composition bias toward basic residues; the sequence is KKKKKNKNKNKKKKKKKI. Position 203 (His-203) interacts with substrate. A divalent metal cation-binding residues include Asp-223, Asp-234, and His-305. His-313 is a binding site for substrate. A divalent metal cation-binding residues include Glu-338 and Glu-433.

This sequence belongs to the peptidase M24A family. Methionine aminopeptidase eukaryotic type 2 subfamily. Co(2+) serves as cofactor. The cofactor is Zn(2+). Mn(2+) is required as a cofactor. It depends on Fe(2+) as a cofactor.

It localises to the cytoplasm. The enzyme catalyses Release of N-terminal amino acids, preferentially methionine, from peptides and arylamides.. Cotranslationally removes the N-terminal methionine from nascent proteins. The N-terminal methionine is often cleaved when the second residue in the primary sequence is small and uncharged (Met-Ala-, Cys, Gly, Pro, Ser, Thr, or Val). This chain is Methionine aminopeptidase 2, found in Candida dubliniensis (strain CD36 / ATCC MYA-646 / CBS 7987 / NCPF 3949 / NRRL Y-17841) (Yeast).